A 294-amino-acid polypeptide reads, in one-letter code: NADH-cytochrome b5 reductase 1 (294 aa).

Residues Pro13–Phe33 form a helical membrane-spanning segment. The FAD-binding FR-type domain occupies Val44–Thr147. Residues Ser127 to Gly142 and His153 to Leu185 each bind FAD.

This sequence belongs to the flavoprotein pyridine nucleotide cytochrome reductase family. Monomer. Component of the 2-(3-amino-3-carboxypropyl)histidine synthase complex composed of DPH1, DPH2, DPH3 and a NADH-dependent reductase, predominantly CBR1. FAD is required as a cofactor.

It is found in the mitochondrion outer membrane. It catalyses the reaction 2 Fe(III)-[cytochrome b5] + NADH = 2 Fe(II)-[cytochrome b5] + NAD(+) + H(+). The catalysed reaction is 2 Fe(3+)-[Dph3] + NADH = 2 Fe(2+)-[Dph3] + NAD(+) + H(+). Its pathway is protein modification; peptidyl-diphthamide biosynthesis. NADH-dependent reductase for DPH3 and cytochrome b5. Required for the first step of diphthamide biosynthesis, a post-translational modification of histidine which occurs in elongation factor 2. DPH1 and DPH2 transfer a 3-amino-3-carboxypropyl (ACP) group from S-adenosyl-L-methionine (SAM) to a histidine residue, the reaction is assisted by a reduction system comprising DPH3 and a NADH-dependent reductase, predominantly CBR1. By reducing DPH3, also involved in the formation of the tRNA wobble base modification mcm5s 2U (5-methoxycarbonylmethyl-2-thiouridine), mediated by the elongator complex. The cytochrome b5/NADH cytochrome b5 reductase electron transfer system supports the catalytic activity of several sterol biosynthetic enzymes. The polypeptide is NADH-cytochrome b5 reductase 1 (CBR1) (Cryptococcus neoformans var. neoformans serotype D (strain B-3501A) (Filobasidiella neoformans)).